A 441-amino-acid polypeptide reads, in one-letter code: Mitochondrial distribution and morphology protein 12 (441 aa).

Positions 1-441 (MSIDIDWERA…VYPSFWTFLV (441 aa)) constitute an SMP-LTD domain. Positions 180–289 (TPLRAVTRGN…SGTPPRRMRE (110 aa)) are disordered. Polar residues-rich tracts occupy residues 226 to 245 (SRPS…SVST) and 253 to 263 (SSQTVLANNPG).

This sequence belongs to the MDM12 family. In terms of assembly, component of the ER-mitochondria encounter structure (ERMES) or MDM complex, composed of MMM1, MDM10, MDM12 and MDM34. An MMM1 homodimer associates with one molecule of MDM12 on each side in a pairwise head-to-tail manner, and the SMP-LTD domains of MMM1 and MDM12 generate a continuous hydrophobic tunnel for phospholipid trafficking.

It is found in the mitochondrion outer membrane. Its subcellular location is the endoplasmic reticulum membrane. Component of the ERMES/MDM complex, which serves as a molecular tether to connect the endoplasmic reticulum (ER) and mitochondria. Components of this complex are involved in the control of mitochondrial shape and protein biogenesis, and function in nonvesicular lipid trafficking between the ER and mitochondria. MDM12 is required for the interaction of the ER-resident membrane protein MMM1 and the outer mitochondrial membrane-resident beta-barrel protein MDM10. The MDM12-MMM1 subcomplex functions in the major beta-barrel assembly pathway that is responsible for biogenesis of all mitochondrial outer membrane beta-barrel proteins, and acts in a late step after the SAM complex. The MDM10-MDM12-MMM1 subcomplex further acts in the TOM40-specific pathway after the action of the MDM12-MMM1 complex. Essential for establishing and maintaining the structure of mitochondria and maintenance of mtDNA nucleoids. This chain is Mitochondrial distribution and morphology protein 12, found in Paracoccidioides brasiliensis (strain Pb18).